Reading from the N-terminus, the 221-residue chain is Immunoregulatory peptides (221 aa).

Residues 1-19 (MNYLCLVVTLVAVAGAISG) form the signal peptide. A propeptide spanning residues 20–45 (EKFSDDNTGYQSTPSLRIRTTPGRRR) is cleaved from the precursor. Residues 21-155 (KFSDDNTGYQ…PRTIGPPYTR (135 aa)) are disordered. A compositionally biased stretch (polar residues) spans 25–34 (DNTGYQSTPS). Low complexity predominate over residues 48 to 69 (PRTIGPPYTRRTLRTTTDYSTT). Composition is skewed to polar residues over residues 70–85 (VENG…STEK) and 123–133 (NGTTPAANSTE). A propeptide spanning residues 191-221 (EISWTFGPLYTWRTTKGYGTTLETTNATSTS) is cleaved from the precursor.

In terms of tissue distribution, salivary glands.

The protein resides in the secreted. Its function is as follows. Suppress host inflammatory response. Exerts significant anti-inflammatory functions, either by directly inhibiting host secretion of inflammatory factors such as tumor necrosis factor-alpha (TNF), monocyte chemotactic protein-1 (CCL2), and interferon-gamma (IFNG) or by indirectly increasing the secretion of immunosuppressant cytokine of interleukin-10 (IL10). Also potently scavenges free radical in vitro in a rapid manner. All tested concentrations of this peptide have little effect on the cell viability. In vivo, inhibits hind paw adjuvant-induced inflammation in mouse in a dose-dependent manner. Functionally, suppress host inflammatory response. Exerts significant anti-inflammatory functions, either by directly inhibiting host secretion of inflammatory factors such as tumor necrosis factor-alpha (TNF), monocyte chemotactic protein-1 (CCL2), and interferon-gamma (IFNG) or by indirectly increasing the secretion of immunosuppressant cytokine of interleukin-10 (IL10). Also potently scavenges free radical in vitro in a rapid manner. Low concentrations of this peptide have little effect on the cell viability, whereas high concentrations increase the cell viability by 10-20%. In vivo, inhibits hind paw adjuvant-induced inflammation in mouse in a dose-dependent manner. In terms of biological role, not studied but probably similar to Hyalomin-B1. The chain is Immunoregulatory peptides from Hyalomma asiaticum asiaticum (Tick).